Here is a 260-residue protein sequence, read N- to C-terminus: Endomucin (260 aa).

A signal peptide spans 1–18; that stretch reads MELLQVTILFLLPSICSS. N-linked (GlcNAc...) asparagine glycans are attached at residues N19, N28, N97, and N103. Over 19–189 the chain is Extracellular; sequence NSTGVLEAAN…TSATSRSYSS (171 aa). Polar residues-rich tracts occupy residues 119–133 and 145–170; these read QSSK…SIKT and ASPS…SQVI. The disordered stretch occupies residues 119–182; it reads QSSKPKTETQ…EGGKNASTSA (64 aa). N163 and N177 each carry an N-linked (GlcNAc...) asparagine glycan. A helical membrane pass occupies residues 190-210; it reads IILPVVIALIVITLSVFVLVG. Topologically, residues 211-260 are cytoplasmic; the sequence is LYRMCWKADPGTPENGNDQPQSDKESVKLLTVKTISHESGEHSAQGKTKN. Position 236 is a phosphoserine (S236).

In terms of processing, highly O-glycosylated. Sialic acid-rich glycoprotein.

It localises to the membrane. Functionally, endothelial sialomucin, also called endomucin or mucin-like sialoglycoprotein, which interferes with the assembly of focal adhesion complexes and inhibits interaction between cells and the extracellular matrix. The polypeptide is Endomucin (EMCN) (Pongo abelii (Sumatran orangutan)).